The following is a 244-amino-acid chain: Ribosomal RNA small subunit methyltransferase G (244 aa).

Residues glycine 84, phenylalanine 89, 107-109, 135-136, and arginine 154 contribute to the S-adenosyl-L-methionine site; these read DST and AE.

The protein belongs to the methyltransferase superfamily. RNA methyltransferase RsmG family.

Its subcellular location is the cytoplasm. Its function is as follows. Specifically methylates the N7 position of a guanine in 16S rRNA. This chain is Ribosomal RNA small subunit methyltransferase G, found in Nostoc punctiforme (strain ATCC 29133 / PCC 73102).